A 245-amino-acid polypeptide reads, in one-letter code: Ribosomal RNA large subunit methyltransferase E (245 aa).

Positions 1 to 25 are disordered; sequence MTKSPIGGNRSGRKLGQKVKKGKLK. The span at 11 to 25 shows a compositional bias: basic residues; that stretch reads SGRKLGQKVKKGKLK. The S-adenosyl-L-methionine site is built by glycine 81, tryptophan 83, aspartate 104, aspartate 120, and aspartate 144. Lysine 184 acts as the Proton acceptor in catalysis.

Belongs to the class I-like SAM-binding methyltransferase superfamily. RNA methyltransferase RlmE family.

Its subcellular location is the cytoplasm. The catalysed reaction is uridine(2552) in 23S rRNA + S-adenosyl-L-methionine = 2'-O-methyluridine(2552) in 23S rRNA + S-adenosyl-L-homocysteine + H(+). In terms of biological role, specifically methylates the uridine in position 2552 of 23S rRNA at the 2'-O position of the ribose in the fully assembled 50S ribosomal subunit. This Sinorhizobium fredii (strain NBRC 101917 / NGR234) protein is Ribosomal RNA large subunit methyltransferase E.